The primary structure comprises 398 residues: Acetate kinase 2 (398 aa).

Asn-7 is a Mg(2+) binding site. An ATP-binding site is contributed by Lys-14. Substrate is bound at residue Arg-91. Asp-148 acts as the Proton donor/acceptor in catalysis. Residues 208 to 212 (HLGNG), 283 to 285 (DFR), and 331 to 335 (GVGEN) each bind ATP. Glu-384 contacts Mg(2+).

Belongs to the acetokinase family. In terms of assembly, homodimer. Requires Mg(2+) as cofactor. It depends on Mn(2+) as a cofactor.

It localises to the cytoplasm. It carries out the reaction acetate + ATP = acetyl phosphate + ADP. It participates in metabolic intermediate biosynthesis; acetyl-CoA biosynthesis; acetyl-CoA from acetate: step 1/2. Catalyzes the formation of acetyl phosphate from acetate and ATP. Can also catalyze the reverse reaction. This chain is Acetate kinase 2, found in Clostridium perfringens (strain 13 / Type A).